Reading from the N-terminus, the 2505-residue chain is Fatty acid synthase (2505 aa).

An N-acetylmethionine modification is found at methionine 1. A Ketosynthase family 3 (KS3) domain is found at 1 to 406 (MEEVVIAGMS…GANVHVILQP (406 aa)). Lysine 59 carries the N6-acetyllysine modification. Serine 63 is modified (phosphoserine). Lysine 70 is subject to N6-acetyllysine. Catalysis depends on cysteine 161, which acts as the For beta-ketoacyl synthase activity. The residue at position 207 (serine 207) is a Phosphoserine. Histidine 293 (for beta-ketoacyl synthase activity) is an active-site residue. The residue at position 298 (lysine 298) is an N6-acetyllysine. The active-site For beta-ketoacyl synthase activity is histidine 331. The segment at 429–817 (RTMEAVQGLL…IDINPNALFP (389 aa)) is acyl and malonyl transferases. Lysine 528 is subject to N6-acetyllysine. Residue serine 581 is the For malonyltransferase activity of the active site. Residues 647–648 (DT) and phenylalanine 671 contribute to the an acyl-CoA site. Lysine 673 is modified (N6-acetyllysine). At serine 725 the chain carries Phosphoserine. Residue arginine 773 coordinates an acyl-CoA. Lysine 790 carries the post-translational modification N6-acetyllysine. The interval 844 to 966 (IPVAEDFPNG…KVYQWEDPDS (123 aa)) is N-terminal hotdog fold. A PKS/mFAS DH domain is found at 844–1112 (IPVAEDFPNG…TSRRQQEQLV (269 aa)). Histidine 878 functions as the Proton acceptor; for dehydratase activity in the catalytic mechanism. Positions 983–1112 (VSRLTQGEVY…TSRRQQEQLV (130 aa)) are C-terminal hotdog fold. Residue lysine 993 is modified to N6-acetyllysine. Aspartate 1032 (proton donor; for dehydratase activity) is an active-site residue. Lysine 1276 carries the post-translational modification N6-acetyllysine. An S-nitrosocysteine modification is found at cysteine 1464. Phosphoserine occurs at positions 1578 and 1588. The tract at residues 1629 to 1857 (DVPSSWTLEE…VQVREEEPEA (229 aa)) is enoyl reductase. An NADP(+)-binding site is contributed by 1665 to 1682 (VLIHSGSGGVGQAAISIA). Lysine 1698 carries the post-translational modification N6-(pyridoxal phosphate)lysine; alternate. Residue lysine 1698 is modified to N6-acetyllysine; alternate. An N6-acetyllysine mark is found at lysine 1765, lysine 1841, and lysine 1989. Residue 1765-1780 (KFDLSNNHPLGMAIFL) coordinates NADP(+). Residues 1858–2113 (MLPGAQPTLI…VLAEKKAVAH (256 aa)) form a beta-ketoacyl reductase region. Cysteine 2085 bears the S-nitrosocysteine mark. A Carrier domain is found at 2113 to 2193 (HGDGEAQRDL…EMSSKAGSDT (81 aa)). At serine 2151 the chain carries O-(pantetheine 4'-phosphoryl)serine; alternate. Serine 2151 carries the post-translational modification Phosphoserine; alternate. Serine 2191 and serine 2230 each carry phosphoserine. The tract at residues 2202–2505 (NDTSLKQAQL…AEPRVSVREG (304 aa)) is thioesterase. Serine 2302 functions as the For thioesterase activity in the catalytic mechanism. Lysine 2385 bears the N6-acetyllysine mark. Lysine 2443 participates in a covalent cross-link: Glycyl lysine isopeptide (Lys-Gly) (interchain with G-Cter in SUMO2). The For thioesterase activity role is filled by histidine 2475.

Homodimer which is arranged in a head to tail fashion. Interacts with CEACAM1; this interaction is insulin and phosphorylation-dependent; reduces fatty-acid synthase activity. In terms of processing, S-nitrosylation of Fatty acid synthase at cysteine residues Cys-1464 or Cys-2085 is important for the enzyme dimerization. In adipocytes, S-nitrosylation of Fatty acid synthase occurs under physiological conditions and gradually increases during adipogenesis.

The protein localises to the cytoplasm. Its subcellular location is the melanosome. It carries out the reaction acetyl-CoA + n malonyl-CoA + 2n NADPH + 2n H(+) = a long-chain fatty acid + (n+1) CoA + n CO2 + 2n NADP(+).. The enzyme catalyses holo-[ACP] + acetyl-CoA = acetyl-[ACP] + CoA. It catalyses the reaction holo-[ACP] + malonyl-CoA = malonyl-[ACP] + CoA. The catalysed reaction is a fatty acyl-[ACP] + malonyl-[ACP] + H(+) = a 3-oxoacyl-[ACP] + holo-[ACP] + CO2. It carries out the reaction a (3R)-hydroxyacyl-[ACP] + NADP(+) = a 3-oxoacyl-[ACP] + NADPH + H(+). The enzyme catalyses a (3R)-hydroxyacyl-[ACP] = a (2E)-enoyl-[ACP] + H2O. It catalyses the reaction a 2,3-saturated acyl-[ACP] + NADP(+) = a (2E)-enoyl-[ACP] + NADPH + H(+). The catalysed reaction is hexadecanoyl-[ACP] + H2O = hexadecanoate + holo-[ACP] + H(+). It carries out the reaction acetyl-[ACP] + malonyl-[ACP] + H(+) = 3-oxobutanoyl-[ACP] + holo-[ACP] + CO2. The enzyme catalyses 3-oxobutanoyl-[ACP] + NADPH + H(+) = (3R)-hydroxybutanoyl-[ACP] + NADP(+). It catalyses the reaction (3R)-hydroxybutanoyl-[ACP] = (2E)-butenoyl-[ACP] + H2O. The catalysed reaction is (2E)-butenoyl-[ACP] + NADPH + H(+) = butanoyl-[ACP] + NADP(+). It carries out the reaction butanoyl-[ACP] + malonyl-[ACP] + H(+) = 3-oxohexanoyl-[ACP] + holo-[ACP] + CO2. The enzyme catalyses 3-oxohexanoyl-[ACP] + NADPH + H(+) = (3R)-hydroxyhexanoyl-[ACP] + NADP(+). It catalyses the reaction (3R)-hydroxyhexanoyl-[ACP] = (2E)-hexenoyl-[ACP] + H2O. The catalysed reaction is (2E)-hexenoyl-[ACP] + NADPH + H(+) = hexanoyl-[ACP] + NADP(+). It carries out the reaction hexanoyl-[ACP] + malonyl-[ACP] + H(+) = 3-oxooctanoyl-[ACP] + holo-[ACP] + CO2. The enzyme catalyses 3-oxooctanoyl-[ACP] + NADPH + H(+) = (3R)-hydroxyoctanoyl-[ACP] + NADP(+). It catalyses the reaction (3R)-hydroxyoctanoyl-[ACP] = (2E)-octenoyl-[ACP] + H2O. The catalysed reaction is (2E)-octenoyl-[ACP] + NADPH + H(+) = octanoyl-[ACP] + NADP(+). It carries out the reaction octanoyl-[ACP] + malonyl-[ACP] + H(+) = 3-oxodecanoyl-[ACP] + holo-[ACP] + CO2. The enzyme catalyses 3-oxodecanoyl-[ACP] + NADPH + H(+) = (3R)-hydroxydecanoyl-[ACP] + NADP(+). It catalyses the reaction (3R)-hydroxydecanoyl-[ACP] = (2E)-decenoyl-[ACP] + H2O. The catalysed reaction is (2E)-decenoyl-[ACP] + NADPH + H(+) = decanoyl-[ACP] + NADP(+). It carries out the reaction decanoyl-[ACP] + malonyl-[ACP] + H(+) = 3-oxododecanoyl-[ACP] + holo-[ACP] + CO2. The enzyme catalyses 3-oxododecanoyl-[ACP] + NADPH + H(+) = (3R)-hydroxydodecanoyl-[ACP] + NADP(+). It catalyses the reaction (3R)-hydroxydodecanoyl-[ACP] = (2E)-dodecenoyl-[ACP] + H2O. The catalysed reaction is (2E)-dodecenoyl-[ACP] + NADPH + H(+) = dodecanoyl-[ACP] + NADP(+). It carries out the reaction dodecanoyl-[ACP] + malonyl-[ACP] + H(+) = 3-oxotetradecanoyl-[ACP] + holo-[ACP] + CO2. The enzyme catalyses 3-oxotetradecanoyl-[ACP] + NADPH + H(+) = (3R)-hydroxytetradecanoyl-[ACP] + NADP(+). It catalyses the reaction (3R)-hydroxytetradecanoyl-[ACP] = (2E)-tetradecenoyl-[ACP] + H2O. The catalysed reaction is (2E)-tetradecenoyl-[ACP] + NADPH + H(+) = tetradecanoyl-[ACP] + NADP(+). It carries out the reaction tetradecanoyl-[ACP] + malonyl-[ACP] + H(+) = 3-oxohexadecanoyl-[ACP] + holo-[ACP] + CO2. The enzyme catalyses 3-oxohexadecanoyl-[ACP] + NADPH + H(+) = (3R)-hydroxyhexadecanoyl-[ACP] + NADP(+). It catalyses the reaction (3R)-hydroxyhexadecanoyl-[ACP] = (2E)-hexadecenoyl-[ACP] + H2O. The catalysed reaction is (2E)-hexadecenoyl-[ACP] + NADPH + H(+) = hexadecanoyl-[ACP] + NADP(+). It carries out the reaction hexadecanoyl-[ACP] + malonyl-[ACP] + H(+) = 3-oxooctadecanoyl-[ACP] + holo-[ACP] + CO2. The enzyme catalyses 3-oxooctadecanoyl-[ACP] + NADPH + H(+) = (3R)-hydroxyoctadecanoyl-[ACP] + NADP(+). It catalyses the reaction (3R)-hydroxyoctadecanoyl-[ACP] = (2E)-octadecenoyl-[ACP] + H2O. The catalysed reaction is (2E)-octadecenoyl-[ACP] + NADPH + H(+) = octadecanoyl-[ACP] + NADP(+). It carries out the reaction tetradecanoyl-[ACP] + H2O = tetradecanoate + holo-[ACP] + H(+). The enzyme catalyses octadecanoyl-[ACP] + H2O = octadecanoate + holo-[ACP] + H(+). It participates in lipid metabolism; fatty acid biosynthesis. Its activity is regulated as follows. Cerulenin, a potent non-competitive pharmacological inhibitor of FAS, binds covalently to the active site of the condensing enzyme region, inactivating a key enzyme step in fatty acid synthesis. Another inhibitor, though less efficient, is C75, a member of the alpha-methylene-gamma-butyrolactone chemical class, also proposed as an antitumour and anti-obesity agent. Fatty acid synthetase is a multifunctional enzyme that catalyzes the de novo biosynthesis of long-chain saturated fatty acids starting from acetyl-CoA and malonyl-CoA in the presence of NADPH. This multifunctional protein contains 7 catalytic activities and a site for the binding of the prosthetic group 4'-phosphopantetheine of the acyl carrier protein ([ACP]) domain. This chain is Fatty acid synthase (Fasn), found in Rattus norvegicus (Rat).